The following is a 271-amino-acid chain: MSLKKSPFFELRSGSVDTLLFIVKTADLDALRAELVKRFEATPEFFADDVVAIDVRRLADNERVPLDDIRGMLSDVRMRAIGVVAQPEQHAWAAGAGLPLLEARDRRAPSPKAADDAPAQPEEPRVPAAGQAALFAQAGPSGADAVAPPAVAAAPVVAAQSATLVIDKPLRSGQQIYAKGDLVVLGPVSYGAEVIAEGNIHIYAPLRGRALAGVHGNHDARIFCTCLEPELISIAGIYRTTENPLPADVLGKSVQIRLEQEKLMIEPLRLT.

Positions 106–125 (RRAPSPKAADDAPAQPEEPR) are disordered. The span at 110–119 (SPKAADDAPA) shows a compositional bias: low complexity.

The protein belongs to the MinC family. In terms of assembly, interacts with MinD and FtsZ.

Cell division inhibitor that blocks the formation of polar Z ring septums. Rapidly oscillates between the poles of the cell to destabilize FtsZ filaments that have formed before they mature into polar Z rings. Prevents FtsZ polymerization. This Burkholderia thailandensis (strain ATCC 700388 / DSM 13276 / CCUG 48851 / CIP 106301 / E264) protein is Probable septum site-determining protein MinC.